Here is a 196-residue protein sequence, read N- to C-terminus: dCTP deaminase (196 aa).

DCTP contacts are provided by residues 113–118 (RSSLAR), Asp-131, 139–141 (VLE), Tyr-174, Lys-181, and Gln-185. Glu-141 acts as the Proton donor/acceptor in catalysis.

It belongs to the dCTP deaminase family. As to quaternary structure, homotrimer.

It carries out the reaction dCTP + H2O + H(+) = dUTP + NH4(+). Its pathway is pyrimidine metabolism; dUMP biosynthesis; dUMP from dCTP (dUTP route): step 1/2. Its function is as follows. Catalyzes the deamination of dCTP to dUTP. The chain is dCTP deaminase from Wigglesworthia glossinidia brevipalpis.